The chain runs to 322 residues: Nucleoprotein (322 aa).

The RNA site is built by Tyr43, Tyr46, Val76, Arg122, Lys240, and Ser269.

The protein belongs to the tenuiviruses nucleocapsid protein family.

The protein resides in the virion. It is found in the host cytoplasm. Encapsidates the genome, protecting it from nucleases. The encapsidated genomic RNA is termed the nucleocapsid (NC), and serves as template for viral transcription and replication. In Avena sativa (Oat), this protein is Nucleoprotein.